We begin with the raw amino-acid sequence, 439 residues long: Glucose-1-phosphate adenylyltransferase (439 aa).

Residues Y122, G187, 202–203, and S220 each bind alpha-D-glucose 1-phosphate; that span reads EK.

Belongs to the bacterial/plant glucose-1-phosphate adenylyltransferase family. Homotetramer.

It carries out the reaction alpha-D-glucose 1-phosphate + ATP + H(+) = ADP-alpha-D-glucose + diphosphate. It participates in glycan biosynthesis; glycogen biosynthesis. In terms of biological role, involved in the biosynthesis of ADP-glucose, a building block required for the elongation reactions to produce glycogen. Catalyzes the reaction between ATP and alpha-D-glucose 1-phosphate (G1P) to produce pyrophosphate and ADP-Glc. The sequence is that of Glucose-1-phosphate adenylyltransferase from Thiobacillus denitrificans (strain ATCC 25259 / T1).